A 957-amino-acid chain; its full sequence is Sorting nexin-13 (957 aa).

Positions 97-284 (ANIIDEPLQQ…YVIWMIRDSN (188 aa)) constitute a PXA domain. Residues 373-511 (PLDSILVDNV…SFRQNALYVR (139 aa)) enclose the RGS domain. In terms of domain architecture, PX spans 559 to 680 (VQLHAYISDT…DFLENKAYSK (122 aa)). A 1,2-diacyl-sn-glycero-3-phospho-(1D-myo-inositol-3-phosphate) is bound by residues Arg601, Ser603, Lys628, and Arg642.

Belongs to the sorting nexin family.

The protein localises to the early endosome membrane. In terms of biological role, may be involved in several stages of intracellular trafficking. Acts as a GAP for Galphas. May play a role in endosome homeostasis. In Mus musculus (Mouse), this protein is Sorting nexin-13 (Snx13).